Consider the following 482-residue polypeptide: MPVVTRLIRLKCVGLRLDRSGLNRRICHGGHGESTRRRVMEELSSLTVSQREQFLVENDVFGIYNYFDASDVSTQKYMMEIQRDKQLDYLMKGLRQLGPQFSSLDANRPWLCYWILHSIALLGETVDDELESNAIDFLGRCQGSEGGYGGGPGQLPHLATTYAAVNALVTLGGDKALSSINREKMSCFLRRMKDTSGGFRMHDMGEMDVRACYTAISVASILNIMDDELTQGLGDYILSCQTYEGGIGGEPGSEAHGGYTYCGLAAMILINEVDRLNLDSLMNWAVHRQGVEMGFQGRTNKLVDGCYTFWQAAPCVLLQRLYSTNDHDVHGSSHISEGTNEEHHAHDEDDLEDSDDDDDSDEDNDEDSVNGHRIHHTSTYINRRMQLVFDSLGLQRYVLLCSKIPDGGFRDKPRKPRDFYHTCYCLSGLSVAQHAWLKDEDTPPLTRDIMGGYSNLLEPVQLLHNIVMDQYNEAIEFFFKAA.

4 PFTB repeats span residues 131-172 (ESNA…VTLG), 182-223 (REKM…SILN), 230-271 (TQGL…ILIN), and 278-319 (LDSL…VLLQ). (2E,6E)-farnesyl diphosphate contacts are provided by residues 256 to 259 (HGGY) and 298 to 301 (RTNK). Residues Asp304 and Cys306 each coordinate Zn(2+). (2E,6E)-farnesyl diphosphate is bound at residue 307 to 310 (YTFW). Residues 329-372 (VHGSSHISEGTNEEHHAHDEDDLEDSDDDDDSDEDNDEDSVNGH) are disordered. The span at 348–368 (EDDLEDSDDDDDSDEDNDEDS) shows a compositional bias: acidic residues. The PFTB 5 repeat unit spans residues 391-433 (SLGLQRYVLLCSKIPDGGFRDKPRKPRDFYHTCYCLSGLSVAQ). His421 provides a ligand contact to Zn(2+).

This sequence belongs to the protein prenyltransferase subunit beta family. As to quaternary structure, heterodimer of FTA and FTB (farnesyltransferase). Heterodimer of an alpha and a beta subunit. The cofactor is Zn(2+).

The catalysed reaction is L-cysteinyl-[protein] + (2E,6E)-farnesyl diphosphate = S-(2E,6E)-farnesyl-L-cysteinyl-[protein] + diphosphate. Its function is as follows. Catalyzes the transfer of a farnesyl moiety from farnesyl diphosphate to a cysteine at the fourth position from the C-terminus of several proteins having the C-terminal sequence Cys-aliphatic-aliphatic-X (CaaX). The beta subunit is responsible for peptide-binding. Acts as an abscisic acid (ABA) negative regulator by mediating ASG2 farnesylation and consequently monitoring its subcellular localization. Involved in responses to salt (NaCl) and osmotic (e.g. in response to mannitol and PEG) stresses. This is Protein farnesyltransferase subunit beta (FTB) from Arabidopsis thaliana (Mouse-ear cress).